Consider the following 377-residue polypeptide: MKNKYYPLRSSMDEMSAKNDNEIDLEKGPLPEYNSEDGSTLPPYSDLNNPKQMGQNITKLFNWNKSTTPPDYDENRLPITDEGNNPPNTHRENHSSGTTDNSSPFLIKLLISFTSIILFNAPAVCYLKYKDAFFKNYGAAEWTLFGFWCLVCTLALLFLTYFYETWSKAVKVTIIFLAQCIKVTAVFLAQCVKVTAISLAKCVKVTAVGLYNSREKWVVIIWLLWVVICYTLFLRSKFGNLNLNKALICSTCSISAALLLFLLYVRLPFWTLKHMFSGLFQVLGVQSCVVIVTKGLMHLFDKHIDATGYEIEVSSLFVIGNFLFFYEMECPGALRRMPKSIRNGIASFLEGTGRAIRGANDNNNSIPLEETEAESEV.

Disordered regions lie at residues 1-49 (MKNK…DLNN) and 64-100 (NKST…GTTD). Residues 11-29 (SMDEMSAKNDNEIDLEKGP) show a composition bias toward basic and acidic residues. The next 7 membrane-spanning stretches (helical) occupy residues 105-125 (FLIK…PAVC), 142-162 (WTLF…LTYF), 172-192 (VTII…AQCV), 218-238 (VVII…RSKF), 252-272 (CSIS…FWTL), 276-296 (FSGL…TKGL), and 306-326 (ATGY…LFFY).

Belongs to the WTF family. In terms of assembly, homomer. Forms protein aggregates. The two isoforms can interact with each other and with themselves. High sequence similarity is required for their interaction.

The protein localises to the spore membrane. It is found in the vacuole membrane. It localises to the ascus epiplasm. The protein resides in the cytoplasm. Its subcellular location is the endoplasmic reticulum membrane. Promotes unequal transmission of alleles from the parental zygote to progeny spores by acting as poison/antidote system where the poison and antidote proteins are produced from the same locus; the poison component is trans-acting and targets all spores within an ascus whereas the antidote component is spore-specific, leading to poisoning of all progeny that do not inherit the allele. In terms of biological role, localizes isoform 2 to the vacuole thereby facilitating its degradation. Functionally, forms toxic aggregates that disrupt spore maturation. The protein is Meiotic driver cw9 of Schizosaccharomyces pombe (Fission yeast).